The sequence spans 122 residues: Large ribosomal subunit protein uL14 (122 aa).

Belongs to the universal ribosomal protein uL14 family. In terms of assembly, part of the 50S ribosomal subunit. Forms a cluster with proteins L3 and L19. In the 70S ribosome, L14 and L19 interact and together make contacts with the 16S rRNA in bridges B5 and B8.

Its function is as follows. Binds to 23S rRNA. Forms part of two intersubunit bridges in the 70S ribosome. The polypeptide is Large ribosomal subunit protein uL14 (Pediococcus pentosaceus (strain ATCC 25745 / CCUG 21536 / LMG 10740 / 183-1w)).